We begin with the raw amino-acid sequence, 371 residues long: Queuine tRNA-ribosyltransferase (371 aa).

Asp-90 functions as the Nucleophile in the catalytic mechanism. Asp-90 serves as the catalytic Proton acceptor. Substrate contacts are provided by residues 90 to 94, Ser-91, Asp-144, Gln-189, and Gly-215; that span reads DSGGF. The RNA binding stretch occupies residues 246 to 252; sequence GVGTPEN. The Nucleophile role is filled by Asp-265. Residues 270 to 274 are RNA binding; important for wobble base 34 recognition; it reads TRNAR. Zn(2+) is bound by residues Cys-303, Cys-305, Cys-308, and His-334.

This sequence belongs to the queuine tRNA-ribosyltransferase family. In terms of assembly, homodimer. Within each dimer, one monomer is responsible for RNA recognition and catalysis, while the other monomer binds to the replacement base PreQ1. Zn(2+) is required as a cofactor.

The enzyme catalyses 7-aminomethyl-7-carbaguanine + guanosine(34) in tRNA = 7-aminomethyl-7-carbaguanosine(34) in tRNA + guanine. The protein operates within tRNA modification; tRNA-queuosine biosynthesis. Catalyzes the base-exchange of a guanine (G) residue with the queuine precursor 7-aminomethyl-7-deazaguanine (PreQ1) at position 34 (anticodon wobble position) in tRNAs with GU(N) anticodons (tRNA-Asp, -Asn, -His and -Tyr). Catalysis occurs through a double-displacement mechanism. The nucleophile active site attacks the C1' of nucleotide 34 to detach the guanine base from the RNA, forming a covalent enzyme-RNA intermediate. The proton acceptor active site deprotonates the incoming PreQ1, allowing a nucleophilic attack on the C1' of the ribose to form the product. After dissociation, two additional enzymatic reactions on the tRNA convert PreQ1 to queuine (Q), resulting in the hypermodified nucleoside queuosine (7-(((4,5-cis-dihydroxy-2-cyclopenten-1-yl)amino)methyl)-7-deazaguanosine). This Helicobacter pylori (strain ATCC 700392 / 26695) (Campylobacter pylori) protein is Queuine tRNA-ribosyltransferase.